A 157-amino-acid chain; its full sequence is Small ribosomal subunit protein uS7 (157 aa).

The protein belongs to the universal ribosomal protein uS7 family. As to quaternary structure, part of the 30S ribosomal subunit. Contacts proteins S9 and S11.

Its function is as follows. One of the primary rRNA binding proteins, it binds directly to 16S rRNA where it nucleates assembly of the head domain of the 30S subunit. Is located at the subunit interface close to the decoding center, probably blocks exit of the E-site tRNA. The protein is Small ribosomal subunit protein uS7 of Borreliella afzelii (strain PKo) (Borrelia afzelii).